We begin with the raw amino-acid sequence, 472 residues long: Eukaryotic translation initiation factor 2 subunit 3 (472 aa).

Alanine 2 carries the post-translational modification N-acetylalanine. Serine 16 carries the phosphoserine modification. One can recognise a tr-type G domain in the interval 39–248 (QATINIGTIG…IVKKIPVPPR (210 aa)). Positions 48–55 (GHVAHGKS) are G1. 51 to 56 (AHGKST) is a GTP binding site. The interval 76-80 (NITIK) is G2. The segment at 134 to 137 (DCPG) is G3. Residues 190 to 193 (NKID) and 225 to 227 (SAQ) contribute to the GTP site. The segment at 190-193 (NKID) is G4. The G5 stretch occupies residues 225-227 (SAQ). The interval 457–469 (GQIRRGVTIKPTV) is interacts with CDC123.

The protein belongs to the TRAFAC class translation factor GTPase superfamily. Classic translation factor GTPase family. EIF2G subfamily. In terms of assembly, eukaryotic translation initiation factor 2 eIF2 is a heterotrimeric complex composed of an alpha (EIF2S1), a beta (EIF2S2) and a gamma (EIF2S3) chain. eIF2 is member of the 43S pre-initiation complex (43S PIC). Interacts (via C-terminus) with CDC123; the interaction is direct.

It localises to the cytoplasm. The protein localises to the cytosol. The enzyme catalyses GTP + H2O = GDP + phosphate + H(+). Its function is as follows. Member of the eIF2 complex that functions in the early steps of protein synthesis by forming a ternary complex with GTP and initiator tRNA. This complex binds to a 40S ribosomal subunit, followed by mRNA binding to form the 43S pre-initiation complex (43S PIC). Junction of the 60S ribosomal subunit to form the 80S initiation complex is preceded by hydrolysis of the GTP bound to eIF2 and release of an eIF2-GDP binary complex. In order for eIF2 to recycle and catalyze another round of initiation, the GDP bound to eIF2 must exchange with GTP by way of a reaction catalyzed by eIF-2B. The sequence is that of Eukaryotic translation initiation factor 2 subunit 3 (EIF2S3) from Bos taurus (Bovine).